We begin with the raw amino-acid sequence, 445 residues long: Exodeoxyribonuclease 7 large subunit (445 aa).

The protein belongs to the XseA family. As to quaternary structure, heterooligomer composed of large and small subunits.

The protein localises to the cytoplasm. The enzyme catalyses Exonucleolytic cleavage in either 5'- to 3'- or 3'- to 5'-direction to yield nucleoside 5'-phosphates.. In terms of biological role, bidirectionally degrades single-stranded DNA into large acid-insoluble oligonucleotides, which are then degraded further into small acid-soluble oligonucleotides. This Nautilia profundicola (strain ATCC BAA-1463 / DSM 18972 / AmH) protein is Exodeoxyribonuclease 7 large subunit.